Consider the following 247-residue polypeptide: Vacuolar iron transporter 1 (247 aa).

Topologically, residues 1-33 (MVIAGVSPPTPSSENLLQEHEEKHFTATDVVRD) are cytoplasmic. The helical transmembrane segment at 34–54 (VIIGVSDGLTVPFALAAGLSG) threads the bilayer. At 55 to 60 (ANVPSS) the chain is on the vacuolar side. Residues 61–81 (LILTAGIAEVAAGAISMGLGG) traverse the membrane as a helical segment. The Cytoplasmic segment spans residues 82-167 (YLAAKSEEDH…PRRALESAMT (86 aa)). E99, E102, E110, E113, M146, and E150 together coordinate Fe cation. The helical transmembrane segment at 168–188 (IALAYVVGGLVPLSPYFFIPF) threads the bilayer. Residues 189–191 (AKQ) are Vacuolar-facing. Residues 192-212 (AMITSIAVTLLALVVFGYIKG) traverse the membrane as a helical segment. The Cytoplasmic segment spans residues 213 to 219 (RFTGSNP). A helical membrane pass occupies residues 220 to 240 (VLSSIQTAIIGALASAAAYAM). At 241-247 (AKAVQSV) the chain is on the vacuolar side.

The protein belongs to the CCC1 family. As to expression, expressed at high levels in the blue epidermal cells of the inner bottom part of the petal (at protein level). No detectable expression in parenchyma and epidermis of the purple segments of the petal, parenchyma of the blue segments, leaf, stem, bulb and root (at protein level). High levels of mRNA in the blue epidermal cells of the inner bottom part of the petal. Low-levels of mRNA in the purple segments of the petal, stem, leaf, root, bulb and pistil.

The protein resides in the vacuole membrane. It carries out the reaction Fe(2+)(in) = Fe(2+)(out). In terms of biological role, vacuolar iron transporter involved in the transfer of iron ions from the cytosol to the vacuole for intracellular iron storage. Plays an essential role in the development of blue coloration in tulip petals most likely due to the accumulation of ferrous ions that can form complexes with anthocyanins. This Tulipa gesneriana (Garden tulip) protein is Vacuolar iron transporter 1.